The sequence spans 94 residues: Co-chaperonin GroES (94 aa).

Belongs to the GroES chaperonin family. As to quaternary structure, heptamer of 7 subunits arranged in a ring. Interacts with the chaperonin GroEL.

It localises to the cytoplasm. Together with the chaperonin GroEL, plays an essential role in assisting protein folding. The GroEL-GroES system forms a nano-cage that allows encapsulation of the non-native substrate proteins and provides a physical environment optimized to promote and accelerate protein folding. GroES binds to the apical surface of the GroEL ring, thereby capping the opening of the GroEL channel. The chain is Co-chaperonin GroES from Shouchella clausii (strain KSM-K16) (Alkalihalobacillus clausii).